The following is a 336-amino-acid chain: Pyridoxal 5'-phosphate synthase subunit PdxS (336 aa).

Aspartate 64 lines the D-ribose 5-phosphate pocket. The active-site Schiff-base intermediate with D-ribose 5-phosphate is lysine 121. Glycine 193 is a D-ribose 5-phosphate binding site. D-glyceraldehyde 3-phosphate is bound at residue lysine 205. D-ribose 5-phosphate-binding positions include glycine 254 and glycine 275 to serine 276.

This sequence belongs to the PdxS/SNZ family. In terms of assembly, in the presence of PdxT, forms a dodecamer of heterodimers.

It carries out the reaction aldehydo-D-ribose 5-phosphate + D-glyceraldehyde 3-phosphate + L-glutamine = pyridoxal 5'-phosphate + L-glutamate + phosphate + 3 H2O + H(+). The protein operates within cofactor biosynthesis; pyridoxal 5'-phosphate biosynthesis. Catalyzes the formation of pyridoxal 5'-phosphate from ribose 5-phosphate (RBP), glyceraldehyde 3-phosphate (G3P) and ammonia. The ammonia is provided by the PdxT subunit. Can also use ribulose 5-phosphate and dihydroxyacetone phosphate as substrates, resulting from enzyme-catalyzed isomerization of RBP and G3P, respectively. The chain is Pyridoxal 5'-phosphate synthase subunit PdxS from Pyrobaculum aerophilum (strain ATCC 51768 / DSM 7523 / JCM 9630 / CIP 104966 / NBRC 100827 / IM2).